The sequence spans 359 residues: Large ribosomal subunit protein uL3 (359 aa).

A disordered region spans residues 336 to 359 (VRPPAKRPPAEAPQITYISRESKQ).

This sequence belongs to the universal ribosomal protein uL3 family. Part of the 50S ribosomal subunit. Forms a cluster with proteins L14 and L24e.

Its function is as follows. One of the primary rRNA binding proteins, it binds directly near the 3'-end of the 23S rRNA, where it nucleates assembly of the 50S subunit. This chain is Large ribosomal subunit protein uL3, found in Thermococcus sibiricus (strain DSM 12597 / MM 739).